The following is a 558-amino-acid chain: Glucose-6-phosphate isomerase (558 aa).

E362 serves as the catalytic Proton donor. Residues H393 and K523 contribute to the active site.

It belongs to the GPI family.

Its subcellular location is the cytoplasm. It carries out the reaction alpha-D-glucose 6-phosphate = beta-D-fructose 6-phosphate. Its pathway is carbohydrate degradation; glycolysis; D-glyceraldehyde 3-phosphate and glycerone phosphate from D-glucose: step 2/4. In Drosophila melanogaster (Fruit fly), this protein is Glucose-6-phosphate isomerase (Pgi).